Consider the following 760-residue polypeptide: Xaa-Pro dipeptidyl-peptidase (760 aa).

Catalysis depends on charge relay system residues serine 349, aspartate 469, and histidine 499.

This sequence belongs to the peptidase S15 family. As to quaternary structure, homodimer.

The protein resides in the cytoplasm. The catalysed reaction is Hydrolyzes Xaa-Pro-|- bonds to release unblocked, N-terminal dipeptides from substrates including Ala-Pro-|-p-nitroanilide and (sequentially) Tyr-Pro-|-Phe-Pro-|-Gly-Pro-|-Ile.. Removes N-terminal dipeptides sequentially from polypeptides having unsubstituted N-termini provided that the penultimate residue is proline. The polypeptide is Xaa-Pro dipeptidyl-peptidase (Streptococcus pyogenes serotype M18 (strain MGAS8232)).